The primary structure comprises 727 residues: Prolyl endopeptidase-like (727 aa).

Catalysis depends on charge relay system residues Ser559, Asp645, and His690.

The protein belongs to the peptidase S9A family. In terms of assembly, homodimer. Interacts with the AP-1 complex.

The protein resides in the cytoplasm. Its subcellular location is the cytosol. The protein localises to the golgi apparatus. It localises to the trans-Golgi network. It is found in the cytoskeleton. The protein resides in the nucleus. Its function is as follows. Serine peptidase whose precise substrate specificity remains unclear. Does not cleave peptides after a arginine or lysine residue. Regulates trans-Golgi network morphology and sorting by regulating the membrane binding of the AP-1 complex. May play a role in the regulation of synaptic vesicle exocytosis. The chain is Prolyl endopeptidase-like (PREPL) from Macaca fascicularis (Crab-eating macaque).